A 370-amino-acid chain; its full sequence is Chloromuconate cycloisomerase (370 aa).

The active-site Proton acceptor is K165. The Mn(2+) site is built by D194, E220, and D245. Catalysis depends on E323, which acts as the Proton donor.

The protein belongs to the mandelate racemase/muconate lactonizing enzyme family. It depends on Mn(2+) as a cofactor.

The enzyme catalyses 2-[(2R)-2-chloro-2,5-dihydro-5-oxofuryl]acetate = 3-chloro-cis,cis-muconate + H(+). It functions in the pathway aromatic compound metabolism; 3-chlorocatechol degradation. This Cupriavidus pinatubonensis (strain JMP 134 / LMG 1197) (Cupriavidus necator (strain JMP 134)) protein is Chloromuconate cycloisomerase (tfdDI).